Consider the following 858-residue polypeptide: DNA replication licensing factor mcm4-A (858 aa).

Residues 1–125 (MSSPTSTPSR…ARKVKQVDLH (125 aa)) form a disordered region. Composition is skewed to polar residues over residues 54-68 (SPSG…SSPA) and 79-94 (LDLS…SSRV). Residues 301–326 (CQVCAFTTRVEIDRGRIAEPSVCKHC) form a C4-type zinc finger. The MCM domain maps to 453–662 (IYERLAAALA…YDRRLAHHLV (210 aa)). Tyrosine 466, arginine 492, lysine 511, serine 512, asparagine 613, arginine 638, arginine 727, and glutamate 730 together coordinate ATP. Positions 637–640 (SRFD) match the Arginine finger motif.

Belongs to the MCM family. As to quaternary structure, component of the mcm2-7 complex (RLF-M). The complex forms a toroidal hexameric ring with the proposed subunit order mcm2-mcm6-mcm4-mcm7-mcm3-mcm5. The heterodimer of mmcm3/mcm5 interacts with mcm4, mmcm6, mcm7 and weakly with mcm2. Component of the CMG helicase complex, composed of the mcm2-7 complex, the GINS complex and cdc45. Post-translationally, hyperphosphorylated during mitosis in a mechanism requiring cdc2-cyclin B and other kinases. Undergoes dephosphorylation after exiting mitosis, existing in a partially phosphorylated state in the cytosolic interphase mcm complex which associates with the pre-replication complexes (pre-Rcs). Complete dephosphorylation inactivates the mcm complex, preventing its binding to chromatin. Becomes actively phosphorylated during S phase once the mcm complex is assembled on the chromatin. This chromatin-associated phosphorylation occurs during the activation of the pre-Rcs and is independent of cdks. Phosphorylated by the cdc7-dbf4b complex.

Its subcellular location is the nucleus. The protein resides in the chromosome. The enzyme catalyses ATP + H2O = ADP + phosphate + H(+). Its function is as follows. Acts as a component of the MCM2-7 complex (MCM complex) which is the replicative helicase essential for 'once per cell cycle' DNA replication initiation and elongation in eukaryotic cells. Core component of CDC45-MCM-GINS (CMG) helicase, the molecular machine that unwinds template DNA during replication, and around which the replisome is built. The active ATPase sites in the MCM2-7 ring are formed through the interaction surfaces of two neighboring subunits such that a critical structure of a conserved arginine finger motif is provided in trans relative to the ATP-binding site of the Walker A box of the adjacent subunit. The six ATPase active sites, however, are likely to contribute differentially to the complex helicase activity. This chain is DNA replication licensing factor mcm4-A (mcm4-a), found in Xenopus laevis (African clawed frog).